The following is a 1909-amino-acid chain: NFX1-type zinc finger-containing protein 1 (1909 aa).

2 stretches are compositionally biased toward basic and acidic residues: residues 1-12 (MEDRRPHLEARP) and 76-107 (RNQE…EGRS). 2 disordered regions span residues 1–133 (MEDR…QPQQ) and 787–813 (TQSA…EEEG). A compositionally biased stretch (polar residues) spans 113–122 (SSDTFQQWHT). Positions 802–813 (EGEEEEEGEEEG) are enriched in acidic residues. The stretch at 939-964 (RRRILSYERQYRTWAERMAELRLQED) forms a coiled coil. NF-X1-type zinc fingers lie at residues 1291–1313 (CGHV…QCMK), 1375–1393 (CGHR…LCSE), 1433–1455 (CGHP…RCQQ), and 1463–1480 (CSHK…PCQR). Residues 1733 to 1764 (LAKKRLSFSSQELSDLQSEIQRLTYLVNLLMR) adopt a coiled-coil conformation. The RZ-type zinc-finger motif lies at 1818–1889 (ISDEERVQIV…LASEMDGAQH (72 aa)). Residues Cys1840, His1844, Cys1860, and Cys1863 each coordinate Zn(2+).

Belongs to the ZNFX1 family. As to quaternary structure, interacts with MAVS.

The protein localises to the mitochondrion outer membrane. It localises to the cytoplasm. The protein resides in the stress granule. RNA-binding protein that initiates the antiviral response and is required to restrict the replication of RNA viruses. Acts as a double-stranded RNA (dsRNA) sensor that recognizes viral RNA and then interacts with MAVS to initiate the type I interferon response. Also required for immunity against some bacteria, such as mycobacteria. This is NFX1-type zinc finger-containing protein 1 from Mus musculus (Mouse).